The sequence spans 397 residues: Succinate--CoA ligase [ADP-forming] subunit beta (397 aa).

Positions 9–244 (KEIMKQYGIS…LTEEDPREVQ (236 aa)) constitute an ATP-grasp domain. Residues lysine 46, 53-55 (GRG), glutamate 99, leucine 102, and glutamate 107 each bind ATP. Mg(2+) is bound by residues asparagine 199 and aspartate 213. Substrate-binding positions include asparagine 264 and 321–323 (GIM).

Belongs to the succinate/malate CoA ligase beta subunit family. As to quaternary structure, heterotetramer of two alpha and two beta subunits. Mg(2+) serves as cofactor.

It carries out the reaction succinate + ATP + CoA = succinyl-CoA + ADP + phosphate. It catalyses the reaction GTP + succinate + CoA = succinyl-CoA + GDP + phosphate. Its pathway is carbohydrate metabolism; tricarboxylic acid cycle; succinate from succinyl-CoA (ligase route): step 1/1. In terms of biological role, succinyl-CoA synthetase functions in the citric acid cycle (TCA), coupling the hydrolysis of succinyl-CoA to the synthesis of either ATP or GTP and thus represents the only step of substrate-level phosphorylation in the TCA. The beta subunit provides nucleotide specificity of the enzyme and binds the substrate succinate, while the binding sites for coenzyme A and phosphate are found in the alpha subunit. This Alkaliphilus metalliredigens (strain QYMF) protein is Succinate--CoA ligase [ADP-forming] subunit beta.